A 484-amino-acid chain; its full sequence is 1,4-beta-D-glucan cellobiohydrolase CEL6A (484 aa).

The first 17 residues, 1–17 (MAKRLLLTAALAATTLA), serve as a signal peptide directing secretion. Positions 26 to 62 (NCGSVWSQCGGQGWTGATCCASGSTCVAQNQWYSQCL) constitute a CBM1 domain. 2 disulfides stabilise this stretch: Cys34–Cys51 and Cys45–Cys61. Residues 68 to 98 (TTTAQAPSSTRTTTSSSSRPTSSSISTSAVN) are disordered. Substrate is bound by residues Trp171 and Asp173. An N-linked (GlcNAc...) asparagine glycan is attached at Asn175. A substrate binding loop 1 region spans residues 208 to 230 (YDLPDRDCAAAASNGEWAIADGG). Catalysis depends on Asp260, which acts as the Proton donor. 6 residues coordinate substrate: His305, Trp308, Asn344, Trp405, Lys433, and Glu437. The segment at 431 to 469 (WIKPGGECDGTSDTTAARYDHHCGFADALKPAPEAGQWF) is substrate binding loop 2. The active-site Proton acceptor is Asp439.

This sequence belongs to the glycosyl hydrolase 6 (cellulase B) family. In terms of assembly, monomer. Both N- and O-glycosylated.

The protein localises to the secreted. It carries out the reaction Hydrolysis of (1-&gt;4)-beta-D-glucosidic linkages in cellulose and cellotetraose, releasing cellobiose from the non-reducing ends of the chains.. In terms of biological role, exoglucanase that plays an important function in biomass degradation by catalyzing the hydrolysis of the non-reducing end beta-1,4-glucosidic linkages in cellulose and cellotetraose to release cellobiose. Hydrolyzes crystalline and amorphous cellulose but is inactive on hydroxyethyl cellulose, mannan, galactomannan, xyloglucan, arabinoxylan, arabinan, xylan, and pectin. The polypeptide is 1,4-beta-D-glucan cellobiohydrolase CEL6A (Podospora anserina (strain S / ATCC MYA-4624 / DSM 980 / FGSC 10383) (Pleurage anserina)).